We begin with the raw amino-acid sequence, 372 residues long: NAD(P)H-quinone oxidoreductase subunit 1 (372 aa).

A run of 8 helical transmembrane segments spans residues tryptophan 29–valine 49, tryptophan 97–valine 117, valine 130–glycine 150, leucine 176–valine 196, isoleucine 204–leucine 224, phenylalanine 254–isoleucine 274, serine 308–methionine 328, and phenylalanine 347–proline 367.

It belongs to the complex I subunit 1 family. NDH-1 is composed of at least 11 different subunits.

It localises to the cellular thylakoid membrane. It catalyses the reaction a plastoquinone + NADH + (n+1) H(+)(in) = a plastoquinol + NAD(+) + n H(+)(out). The catalysed reaction is a plastoquinone + NADPH + (n+1) H(+)(in) = a plastoquinol + NADP(+) + n H(+)(out). Its function is as follows. NDH-1 shuttles electrons from an unknown electron donor, via FMN and iron-sulfur (Fe-S) centers, to quinones in the respiratory and/or the photosynthetic chain. The immediate electron acceptor for the enzyme in this species is believed to be plastoquinone. Couples the redox reaction to proton translocation, and thus conserves the redox energy in a proton gradient. This Crocosphaera subtropica (strain ATCC 51142 / BH68) (Cyanothece sp. (strain ATCC 51142)) protein is NAD(P)H-quinone oxidoreductase subunit 1.